An 859-amino-acid polypeptide reads, in one-letter code: Mycobactin import ATP-binding/permease protein IrtA (859 aa).

At 1–292 the chain is on the cytoplasmic side; that stretch reads MARGLQGVML…SRLLAPLKLP (292 aa). The 108-residue stretch at 15–122 folds into the FAD-binding FR-type domain; sequence ARDHTATVIE…MSLMGSSRFD (108 aa). Residues 70-73, 87-91, and 97-98 contribute to the FAD site; these read RAYT, DVVLH, and AS. The segment at 247-267 is disordered; that stretch reads HRATEPAATEPEVGAAPQPES. The chain crosses the membrane as a helical span at residues 293–313; the sequence is LVLSGVLAALVTLAQLAPFVL. The ABC transmembrane type-1 domain occupies 293–575; sequence LVLSGVLAAL…IAYGLGGLRT (283 aa). Residues 314 to 334 are Periplasmic-facing; it reads LVELSRLLVSGAGAHRLFTVG. A helical transmembrane segment spans residues 335 to 355; sequence FAAVGLLGTGALLAAALTLWL. Topologically, residues 356–408 are cytoplasmic; the sequence is HVIDARFARALRLRLLSKLSRLPLGWFTSRGSGSIKKLVTDDTLALHYLVTHA. A helical transmembrane segment spans residues 409–429; it reads VPDAVAAVVAPVGVLVYLFVV. Topologically, residues 430 to 432 are periplasmic; that stretch reads DWR. A helical membrane pass occupies residues 433 to 453; the sequence is VALVLFGPVLVYLTITSSLTI. Residues 454–519 lie on the Cytoplasmic side of the membrane; the sequence is QSGPRIVQAQ…PLAGKKTLMD (66 aa). Residues 520 to 540 traverse the membrane as a helical segment; it reads LATRPATFLWLIAATGTLLVA. The Periplasmic segment spans residues 541–548; the sequence is THRMDPVN. A helical membrane pass occupies residues 549–569; it reads LLPFMFLGTTFGARLLGIAYG. The Cytoplasmic portion of the chain corresponds to 570–859; sequence LGGLRTGLLA…AVAAAQDGTR (290 aa). The ABC transporter domain occupies 610 to 843; it reads VVFDHVTFGY…GGRYCRLWDT (234 aa). 643–650 contacts ATP; the sequence is GPSGSGKS.

It belongs to the ABC transporter superfamily. Siderophore-Fe(3+) uptake transporter (SIUT) (TC 3.A.1.21) family. In terms of assembly, forms a heterodimer with IrtB. The cofactor is FAD.

The protein resides in the cell inner membrane. Part of the ABC transporter complex IrtAB involved in the import of iron-bound mycobactin (Fe-MBT) and carboxymycobactin (Fe-cMBT). Mycobactins are then reduced by the siderophore interaction domain to facilitate iron release in the bacterial cell. Transmembrane domains (TMD) form a pore in the membrane and the ATP-binding domain (NBD) is responsible for energy generation. Required for replication in human macrophages and in mouse lungs. In Mycobacterium tuberculosis (strain ATCC 25618 / H37Rv), this protein is Mycobactin import ATP-binding/permease protein IrtA (irtA).